The sequence spans 369 residues: Iron-sulfur cluster carrier protein (369 aa).

115-122 contributes to the ATP binding site; it reads GKGGVGKS.

Belongs to the Mrp/NBP35 ATP-binding proteins family. Homodimer. Holo-ApbC forms a mixture of homodimers and homotetramers.

In terms of biological role, binds and transfers iron-sulfur (Fe-S) clusters to target apoproteins. Can hydrolyze ATP. Both activities are required for function in vivo, but the ability to hydrolyze ATP is not necessary for Fe-S cluster transfer. This is Iron-sulfur cluster carrier protein from Salmonella typhimurium (strain LT2 / SGSC1412 / ATCC 700720).